A 276-amino-acid polypeptide reads, in one-letter code: Rhomboid protease GlpG (276 aa).

The next 6 membrane-spanning stretches (helical) occupy residues 96–116 (VTWL…IVGA), 142–162 (AFMH…WYIG), 169–189 (LGSG…GYVQ), 192–212 (FSGP…GYAW), 229–249 (LIAF…GMSM), and 250–270 (ANGA…ADTV). The active-site Nucleophile is Ser201. Residue His254 is part of the active site.

It belongs to the peptidase S54 family.

Its subcellular location is the cell inner membrane. It catalyses the reaction Cleaves type-1 transmembrane domains using a catalytic dyad composed of serine and histidine that are contributed by different transmembrane domains.. In terms of biological role, rhomboid-type serine protease that catalyzes intramembrane proteolysis. This chain is Rhomboid protease GlpG, found in Citrobacter koseri (strain ATCC BAA-895 / CDC 4225-83 / SGSC4696).